A 553-amino-acid polypeptide reads, in one-letter code: MAAPAAGPVFWRRLLGLLPGRPGLAALLGRLSDRLGRSRERRRRRSPWLLLAPLLSPTVPQVTSPPCCLCPEGVHRFQWIRNLVPEFGVSSSHVRVLSSPAEFFELMKGQIKIAKRRVVMASLYLGTGPLEQELVDCLESSLEKSLQAKFPSDLKVSILLDFTRGSRGRKNSRTMLLPLLQRFPERVRVSLFHTPNLRGLLRLLIPERFNETIGLQHIKVYLFDNNVILSGANLSDSYFTNRQDRYVFLQDCAEIADFFTELVDAVGDVSLQLQGDDTVEVVDGMVHPYKGDRAAYCRAANKRVMDVIHSARARQQMLHAQTFHSDSLLSQEEAAAAGDRRPAPDTWIYPLIQMKPFEIQIDEIVTETLLTEAERGAKVFLTTGYFNLTQAYMDLVLGTRAEYQILLASPEVNGFFGAKGVAGAIPAAYVHIERQFYSEVCSLGQQDRVQLQEYWRRGWTFHAKGLWLYLAGSSLPCLTLIGSPNFGYRSVHRDLEAQIAIVTESRSLQQQLHQEQEQLYLRSGVVTSATFEQPGRQVKLWVKMVTPLIKNFF.

The transit peptide at 1 to 25 (MAAPAAGPVFWRRLLGLLPGRPGLA) directs the protein to the mitochondrion. Position 46 is a phosphoserine (Ser46). 121 to 128 (ASLYLGTG) lines the ATP pocket. PLD phosphodiesterase domains follow at residues 212 to 238 (TIGL…SDSY) and 457 to 490 (RGWT…GYRS). Catalysis depends on residues His217, Lys219, and Asp224.

Belongs to the CDP-alcohol phosphatidyltransferase class-II family. In terms of tissue distribution, widely expressed with higher expression in testis, liver and brain.

Its subcellular location is the mitochondrion. The catalysed reaction is a CDP-1,2-diacyl-sn-glycerol + sn-glycerol 3-phosphate = a 1,2-diacyl-sn-glycero-3-phospho-(1'-sn-glycero-3'-phosphate) + CMP + H(+). It participates in phospholipid metabolism; phosphatidylglycerol biosynthesis; phosphatidylglycerol from CDP-diacylglycerol: step 1/2. Activated by calcium and magnesium and inhibited by other bivalent cations. Functions in the biosynthesis of the anionic phospholipids phosphatidylglycerol and cardiolipin. In Mus musculus (Mouse), this protein is CDP-diacylglycerol--glycerol-3-phosphate 3-phosphatidyltransferase, mitochondrial (Pgs1).